We begin with the raw amino-acid sequence, 216 residues long: Phosphoenolpyruvate guanylyltransferase (216 aa).

Positions 150, 165, and 168 each coordinate phosphoenolpyruvate.

This sequence belongs to the CofC family.

It carries out the reaction phosphoenolpyruvate + GTP + H(+) = enolpyruvoyl-2-diphospho-5'-guanosine + diphosphate. The protein operates within cofactor biosynthesis; coenzyme F420 biosynthesis. In terms of biological role, guanylyltransferase that catalyzes the activation of phosphoenolpyruvate (PEP) as enolpyruvoyl-2-diphospho-5'-guanosine, via the condensation of PEP with GTP. It is involved in the biosynthesis of coenzyme F420, a hydride carrier cofactor. The polypeptide is Phosphoenolpyruvate guanylyltransferase (Mycobacterium leprae (strain Br4923)).